The chain runs to 515 residues: Cytochrome P450 1A1 (515 aa).

Phenylalanine 225 is a binding site for substrate. Cysteine 459 lines the heme pocket.

Belongs to the cytochrome P450 family. The cofactor is heme.

It localises to the endoplasmic reticulum membrane. The protein localises to the microsome membrane. It catalyses the reaction an organic molecule + reduced [NADPH--hemoprotein reductase] + O2 = an alcohol + oxidized [NADPH--hemoprotein reductase] + H2O + H(+). Cytochromes P450 are a group of heme-thiolate monooxygenases. They oxidize a variety of structurally unrelated compounds, including steroids, fatty acids, and xenobiotics. The polypeptide is Cytochrome P450 1A1 (cyp1a1) (Microgadus tomcod (Atlantic tomcod)).